Consider the following 223-residue polypeptide: Ribose-5-phosphate isomerase A (223 aa).

Substrate contacts are provided by residues 28–31, 81–84, and 94–97; these read TGST, DGAD, and KGGG. The active-site Proton acceptor is the Glu-103. Lys-121 is a substrate binding site.

This sequence belongs to the ribose 5-phosphate isomerase family. In terms of assembly, homodimer.

The catalysed reaction is aldehydo-D-ribose 5-phosphate = D-ribulose 5-phosphate. It participates in carbohydrate degradation; pentose phosphate pathway; D-ribose 5-phosphate from D-ribulose 5-phosphate (non-oxidative stage): step 1/1. Catalyzes the reversible conversion of ribose-5-phosphate to ribulose 5-phosphate. The polypeptide is Ribose-5-phosphate isomerase A (Janthinobacterium sp. (strain Marseille) (Minibacterium massiliensis)).